The following is a 130-amino-acid chain: Small ribosomal subunit protein uS9 (130 aa).

It belongs to the universal ribosomal protein uS9 family.

The sequence is that of Small ribosomal subunit protein uS9 from Shewanella amazonensis (strain ATCC BAA-1098 / SB2B).